A 1288-amino-acid chain; its full sequence is Symplekin (1288 aa).

Residues 1-124 are interaction with HSF1; sequence MASSSGDSVT…NMLLRDENVN (124 aa). Ser-13 carries the phosphoserine modification. HEAT repeat units follow at residues 31 to 64, 67 to 101, 104 to 146, 153 to 192, and 227 to 266; these read TTSE…LIIN, PTLL…EACK, IELL…WMVK, LQEA…GLIV, and VLWE…IARQ. The interval 335-392 is disordered; the sequence is IARNMPSSKDSRKRPRDDTDSTLKKMKLEPNLGEDDEDKDLEPGPSGTSKASAQISGQ. A Nuclear localization signal motif is present at residues 345 to 360; it reads SRKRPRDDTDSTLKKM. Over residues 349–362 the composition is skewed to basic and acidic residues; the sequence is PRDDTDSTLKKMKL. Lys-361 participates in a covalent cross-link: Glycyl lysine isopeptide (Lys-Gly) (interchain with G-Cter in SUMO1); alternate. Lys-361 is covalently cross-linked (Glycyl lysine isopeptide (Lys-Gly) (interchain with G-Cter in SUMO2); alternate). Positions 380–392 are enriched in polar residues; that stretch reads SGTSKASAQISGQ. Lys-483 is covalently cross-linked (Glycyl lysine isopeptide (Lys-Gly) (interchain with G-Cter in SUMO2)). Ser-494 carries the post-translational modification Phosphoserine. Disordered regions lie at residues 1130–1151 and 1163–1288; these read PAPA…PPQD and LKRQ…KGNS. Over residues 1131 to 1149 the composition is skewed to pro residues; that stretch reads APAPAPAPAPAPAPAPRPP. A compositionally biased stretch (basic and acidic residues) spans 1163-1173; sequence LKRQLEEEQKQ. A phosphoserine mark is found at Ser-1238 and Ser-1239. Lys-1256 participates in a covalent cross-link: Glycyl lysine isopeptide (Lys-Gly) (interchain with G-Cter in SUMO1). Residue Ser-1260 is modified to Phosphoserine. Residues 1267-1288 are compositionally biased toward basic and acidic residues; it reads AVEEALKTSSPETREPESKGNS. Thr-1274 is modified (phosphothreonine). Ser-1276 is modified (phosphoserine).

Belongs to the Symplekin family. Found in a heat-sensitive complex at least composed of several cleavage and polyadenylation specific and cleavage stimulation factors. Interacts with CPSF2, CPSF3 and CSTF2. Interacts (via N-terminus) with HSF1; this interaction is direct and occurs upon heat shock. Interacts with SSU72.

It is found in the cytoplasm. The protein localises to the cytoskeleton. It localises to the cell junction. The protein resides in the tight junction. Its subcellular location is the cell membrane. It is found in the nucleus. The protein localises to the nucleoplasm. In terms of biological role, scaffold protein that functions as a component of a multimolecular complex involved in histone mRNA 3'-end processing. Specific component of the tight junction (TJ) plaque, but might not be an exclusively junctional component. May have a house-keeping rule. Is involved in pre-mRNA polyadenylation. Enhances SSU72 phosphatase activity. The sequence is that of Symplekin (Sympk) from Mus musculus (Mouse).